Here is a 714-residue protein sequence, read N- to C-terminus: Interferon-induced GTP-binding protein Mx2 (714 aa).

The disordered stretch occupies residues 1–89; that stretch reads MSMSYRALKF…QRSKGSENNL (89 aa). Composition is skewed to polar residues over residues 61 to 70 and 79 to 88; these read NNFNQLNLDP and QQRSKGSENN. Positions 115–386 constitute a Dynamin-type G domain; the sequence is DLALPAIAVI…LIWHINKSLP (272 aa). Residues 125–132 form a G1 motif region; the sequence is GDQSSGKS. 125–132 is a binding site for GTP; sequence GDQSSGKS. Residues 150 to 152 form a G2 motif region; sequence ITR. The interval 224–227 is G3 motif; that stretch reads DLPG. GTP contacts are provided by residues 224 to 228 and 293 to 296; these read DLPGI and TKPD. The segment at 293–296 is G4 motif; that stretch reads TKPD. The tract at residues 325 to 328 is G5 motif; that stretch reads KCRG. Residues 622 to 713 enclose the GED domain; that stretch reads IVEIGVHLNA…ALYEFPHFKS (92 aa).

This sequence belongs to the TRAFAC class dynamin-like GTPase superfamily. Dynamin/Fzo/YdjA family.

Its subcellular location is the cytoplasm. The protein resides in the nucleus. Functionally, interferon-induced dynamin-like GTPase with antiviral activity. The chain is Interferon-induced GTP-binding protein Mx2 (MX2) from Ovis aries (Sheep).